The primary structure comprises 116 residues: M-zodatoxin-Lt6a/c (116 aa).

Residues methionine 1–threonine 22 form the signal peptide. Propeptides lie at residues valine 23–arginine 44 and glutamate 80–arginine 83. 2 short sequence motifs (processing quadruplet motif) span residues aspartate 41–arginine 44 and glutamate 80–arginine 83. Glutamine 84 is subject to Pyrrolidone carboxylic acid.

This sequence belongs to the cationic peptide 03 (latarcin) family. 06 subfamily. Cleavage of the propeptide depends on the processing quadruplet motif (XXXR, with at least one of X being E). As to expression, expressed by the venom gland.

Its subcellular location is the secreted. Functionally, does not have antimicrobial activity against Gram-positive bacteria (A.globiformis VKM Ac-1112 (MIC&gt;70 uM) and B.subtilis VKM B-501 (MIC&gt;70 uM)), Gram-negative bacteria (E.coli DH5-alpha (MIC&gt;70 uM), E.coli MH1 (MIC&gt;70 uM) and P.aeruginosa PAO1 (MIC&gt;70 uM)), yeast (P.pastoris GS115 (MIC&gt;70 uM) or S.cerevisiae Y190 (MIC&gt;70 uM)). Does not have hemolytic activity against rabbit erythrocytes. However, it causes some conductance changes in planar bilayer membranes, without membrane rupture, suggesting a cytolytic function on other biological targets. It causes paralysis, but is not lethal when injected into insect larvae. The chain is M-zodatoxin-Lt6a/c from Lachesana tarabaevi (Spider).